A 178-amino-acid polypeptide reads, in one-letter code: Caveolin-1 (178 aa).

At serine 2 the chain carries N-acetylserine. A Phosphoserine modification is found at serine 2. A required for homooligomerization region spans residues 2–94 (SGGKYVDSEG…WKASFTTFTV (93 aa)). At 2 to 104 (SGGKYVDSEG…TKYWFYRLLS (103 aa)) the chain is on the cytoplasmic side. Lysine 5 carries the N6-acetyllysine; alternate modification. Lysine 5 participates in a covalent cross-link: Glycyl lysine isopeptide (Lys-Gly) (interchain with G-Cter in ubiquitin); alternate. Residue tyrosine 6 is modified to Phosphotyrosine. Serine 9 is modified (phosphoserine). Tyrosine 14 carries the post-translational modification Phosphotyrosine; by ABL1 and INSR. Tyrosine 25 carries the post-translational modification Phosphotyrosine. Glycyl lysine isopeptide (Lys-Gly) (interchain with G-Cter in ubiquitin) cross-links involve residues lysine 26, lysine 30, lysine 39, lysine 47, and lysine 57. The segment at 82–94 (DGIWKASFTTFTV) is interaction with CAVIN3. The helical intramembrane region spans 105-125 (TIFGIPMALIWGIYFAILSFL). Topologically, residues 126 to 178 (HIWAVVPCIKSFLIEIQCISRVYSIYVHTFCDPLFEAIGKIFSNIRISTQKEI) are cytoplasmic. Residues 131–142 (VPCIKSFLIEIQ) form an interacts with SPRY1, SPRY2, SPRY3 and SPRY4 region. Residues cysteine 133, cysteine 143, and cysteine 156 are each lipidated (S-palmitoyl cysteine). Residues 149-160 (SIYVHTFCDPLF) form an interacts with SPRY1, SPRY2, and SPRY4 region. The tract at residues 167-178 (FSNIRISTQKEI) is interacts with SPRY1, SPRY2, SPRY3 and SPRY4.

The protein belongs to the caveolin family. Homooligomer. Interacts (via the N-terminus) with DPP4; the interaction is direct. Forms a stable heterooligomeric complex with CAV2 that targets to lipid rafts and drives caveolae formation. Interacts with BMX, BTK, CTNNB1, CDH1, GLIPR2, JUP, NOSTRIN, SNAP25 and STX1A. Interacts with SLC7A9. Interacts with TGFBR1. Interacts with CTNNB1, CDH1 and JUP. Interacts with PACSIN2; this interaction induces membrane tubulation. Interacts with CAVIN3 (via leucine-zipper domain) in a cholesterol-sensitive manner. Interacts with EHD2 in a cholesterol-dependent manner. Interacts with CAVIN1. Forms a ternary complex with UBXN6 and VCP; mediates CAV1 targeting to lysosomes for degradation. Interacts with ABCG1; this interaction regulates ABCG1-mediated cholesterol efflux. Interacts with NEU3; this interaction enhances NEU3 sialidase activity within caveola. Interacts (via C-terminus) with SPRY1, SPRY2 (via C-terminus), SPRY3, and SPRY4. Interacts with IGFBP5; this interaction allows trafficking of IGFBP5 from the plasma membrane to the nucleus. In terms of processing, the N-terminus of both isoforms are blocked. Phosphorylated at Tyr-14 by ABL1 in response to oxidative stress. Post-translationally, ubiquitinated. Undergo monoubiquitination and multi- and/or polyubiquitination. Monoubiquitination of N-terminal lysines promotes integration in a ternary complex with UBXN6 and VCP which promotes oligomeric CAV1 targeting to lysosomes for degradation. Ubiquitinated by ZNRF1; leading to degradation and modulation of the TLR4-mediated immune response. Adipose tissue, lung, heart, skeletal muscle, stomach, small bowel, kidney, spleen and testis (at protein level).

Its subcellular location is the golgi apparatus membrane. The protein resides in the cell membrane. The protein localises to the membrane. It is found in the caveola. It localises to the membrane raft. Its subcellular location is the golgi apparatus. The protein resides in the trans-Golgi network. Functionally, may act as a scaffolding protein within caveolar membranes. Forms a stable heterooligomeric complex with CAV2 that targets to lipid rafts and drives caveolae formation. Mediates the recruitment of CAVIN proteins (CAVIN1/2/3/4) to the caveolae. Interacts directly with G-protein alpha subunits and can functionally regulate their activity. Involved in the costimulatory signal essential for T-cell receptor (TCR)-mediated T-cell activation. Its binding to DPP4 induces T-cell proliferation and NF-kappa-B activation in a T-cell receptor/CD3-dependent manner. Recruits CTNNB1 to caveolar membranes and may regulate CTNNB1-mediated signaling through the Wnt pathway. Negatively regulates TGFB1-mediated activation of SMAD2/3 by mediating the internalization of TGFBR1 from membrane rafts leading to its subsequent degradation. Binds 20(S)-hydroxycholesterol (20(S)-OHC). The protein is Caveolin-1 (Cav1) of Mus musculus (Mouse).